Consider the following 239-residue polypeptide: Diablo IAP-binding mitochondrial protein (239 aa).

A mitochondrion-targeting transit peptide spans 1–22 (MAVLKSWLSRSVTLLFRYRQCL). Residues 56–60 (AVPIA) carry the IAP-binding motif. Residues 217 to 239 (RQKTQEEGEERAESEQEAYLRED) are disordered.

It belongs to the Smac/DIABLO protein family. Homodimer. Interacts with BEX3. Interacts with BIRC2/c-IAP1 (via BIR3 domain). Interacts with BIRC6/BRUCE. Interacts with BIRC7/livin. Interacts with XIAP/BIRC4 (via BIR3 domain). Interacts with the monomeric and dimeric form of BIRC5/survivin. Interacts with AREL1 (via HECT domain); in the cytoplasm following induction of apoptosis. In terms of processing, ubiquitinated by BIRC7/livin. Ubiquitinated by BIRC6. Post-translationally, the precursor form is proteolytically cleaved by mitochondrial processing peptidase MPP to remove the transit peptide and produce an intermediate form. This is then processed by PARL to produce the mature cleaved form which is released from mitochondria into the cytosol in apoptotic cells.

Its subcellular location is the mitochondrion. The protein resides in the cytoplasm. The protein localises to the cytosol. In terms of biological role, promotes apoptosis by activating caspases in the cytochrome c/Apaf-1/caspase-9 pathway. Acts by opposing the inhibitory activity of inhibitor of apoptosis proteins (IAP). Inhibits the activity of BIRC6/BRUCE by inhibiting its binding to caspases. This Pongo abelii (Sumatran orangutan) protein is Diablo IAP-binding mitochondrial protein.